The following is a 324-amino-acid chain: Olfactory receptor 52I1 (324 aa).

Residues 1–29 (MLGPAYNHTMETPASFLLVGIPGLQSSHL) are Extracellular-facing. Asn7 carries an N-linked (GlcNAc...) asparagine glycan. Residues 30–50 (WLAISLSAMYITALLGNTLIV) traverse the membrane as a helical segment. The Cytoplasmic segment spans residues 51–58 (TAIWMDST). The chain crosses the membrane as a helical span at residues 59 to 79 (RHEPMYCFLCVLAAVDIVMAS). Topologically, residues 80-103 (SVVPKMVSIFCSGDSSISFSACFT) are extracellular. A disulfide bond links Cys101 and Cys193. A helical membrane pass occupies residues 104 to 124 (QMFFVHLATAVETGLLLTMAF). At 125–143 (DRYVAICKPLHYKRILTPQ) the chain is on the cytoplasmic side. Residues 144–164 (VMLGMSMAVTIRAVTFMTPLS) form a helical membrane-spanning segment. Residues 165–200 (WMMNHLPFCGSNVVVHSYCKHIALARLACADPVPSS) are Extracellular-facing. The helical transmembrane segment at 201 to 221 (LYSLIGSSLMVGSDVAFIAAS) threads the bilayer. Over 222 to 241 (YILILRAVFDLSSKTAQLKA) the chain is Cytoplasmic. The chain crosses the membrane as a helical span at residues 242-262 (LSTCGSHVGVMALYYLPGMAS). Residues 263–278 (IYAAWLGQDIVPLHTQ) lie on the Extracellular side of the membrane. Residues 279-299 (VLLADLYVIIPATLNPIIYGM) traverse the membrane as a helical segment. At 300-324 (RTKQLLEGIWSYLMHFLFDHSNLGS) the chain is on the cytoplasmic side.

The protein belongs to the G-protein coupled receptor 1 family.

Its subcellular location is the cell membrane. In terms of biological role, odorant receptor. This Homo sapiens (Human) protein is Olfactory receptor 52I1 (OR52I1).